The chain runs to 355 residues: MALRLLRLVPASAPARGLAAGAQRVGRIHTSVHCKLRYGLLAAILGDKTTKKLHEYSRVITVDGNICSGKNKLAKEIAQQLGMKHYPEAGIQYSSTTTGDGRPLDIEFSGSCSLEKFYDDPKSNDGNSYRLQSWLYASRLLQYADALEHLLSTGQGVVLERSIYSDFVFLEAMYNQGYIRKQCVDHYNEIKRLTLPEYLPPHAVIYIDVPVPEVQSRIQKKGDPHEMKVTSAYLQDIENAYKKTFLPKMSEMCEVLVYDSWEAEDPTKVVEDIEYLKYNKGPWLKQDDWTFHYLRMLVQDKTEVLNYTTIPVYLPEITIGAHQGSRIYNSFRELPGRKYAPGYNAEVGDKWIWLK.

The N-terminal 35 residues, 1–35, are a transit peptide targeting the mitochondrion; it reads MALRLLRLVPASAPARGLAAGAQRVGRIHTSVHCK. Position 122 is an N6-acetyllysine; alternate (Lys122). Residue Lys122 is modified to N6-succinyllysine; alternate. Ser250 is subject to Phosphoserine; by PINK1. Residue Lys285 is modified to N6-succinyllysine.

This sequence belongs to the complex I NDUFA10 subunit family. As to quaternary structure, complex I is composed of 45 different subunits. This a component of the hydrophobic protein fraction. FAD serves as cofactor. Post-translationally, phosphorylation at Ser-250 by PINK1 is required for the binding and/or reduction of the complex I substrate ubiquinone. In terms of processing, acetylation of Lys-242 is observed in liver mitochondria from fasted mice but not from fed mice.

It localises to the mitochondrion matrix. Accessory subunit of the mitochondrial membrane respiratory chain NADH dehydrogenase (Complex I), that is believed not to be involved in catalysis. Complex I functions in the transfer of electrons from NADH to the respiratory chain. The immediate electron acceptor for the enzyme is believed to be ubiquinone. The chain is NADH dehydrogenase [ubiquinone] 1 alpha subcomplex subunit 10, mitochondrial (Ndufa10) from Mus musculus (Mouse).